The chain runs to 468 residues: UDP-N-acetylmuramate--L-alanine ligase (468 aa).

112-118 contacts ATP; the sequence is GTHGKTT.

It belongs to the MurCDEF family.

It is found in the cytoplasm. The enzyme catalyses UDP-N-acetyl-alpha-D-muramate + L-alanine + ATP = UDP-N-acetyl-alpha-D-muramoyl-L-alanine + ADP + phosphate + H(+). It functions in the pathway cell wall biogenesis; peptidoglycan biosynthesis. Functionally, cell wall formation. This chain is UDP-N-acetylmuramate--L-alanine ligase, found in Bordetella petrii (strain ATCC BAA-461 / DSM 12804 / CCUG 43448).